Consider the following 395-residue polypeptide: Chorismate synthase (395 aa).

Residues Arg40 and Arg46 each coordinate NADP(+). Positions 98 to 120 (LPREGRNAPLSRPRPGHADLTGM) are disordered. Residues 134–136 (RSS), 256–257 (QA), Gly301, 316–320 (KPIPS), and Arg342 each bind FMN.

It belongs to the chorismate synthase family. As to quaternary structure, homotetramer. The cofactor is FMNH2.

The catalysed reaction is 5-O-(1-carboxyvinyl)-3-phosphoshikimate = chorismate + phosphate. The protein operates within metabolic intermediate biosynthesis; chorismate biosynthesis; chorismate from D-erythrose 4-phosphate and phosphoenolpyruvate: step 7/7. Catalyzes the anti-1,4-elimination of the C-3 phosphate and the C-6 proR hydrogen from 5-enolpyruvylshikimate-3-phosphate (EPSP) to yield chorismate, which is the branch point compound that serves as the starting substrate for the three terminal pathways of aromatic amino acid biosynthesis. This reaction introduces a second double bond into the aromatic ring system. The polypeptide is Chorismate synthase (Bifidobacterium longum subsp. infantis (strain ATCC 15697 / DSM 20088 / JCM 1222 / NCTC 11817 / S12)).